Consider the following 469-residue polypeptide: ATP synthase subunit beta (469 aa).

156 to 163 (GGAGVGKT) contacts ATP.

Belongs to the ATPase alpha/beta chains family. As to quaternary structure, F-type ATPases have 2 components, CF(1) - the catalytic core - and CF(0) - the membrane proton channel. CF(1) has five subunits: alpha(3), beta(3), gamma(1), delta(1), epsilon(1). CF(0) has three main subunits: a(1), b(2) and c(9-12). The alpha and beta chains form an alternating ring which encloses part of the gamma chain. CF(1) is attached to CF(0) by a central stalk formed by the gamma and epsilon chains, while a peripheral stalk is formed by the delta and b chains.

The protein resides in the cell membrane. The catalysed reaction is ATP + H2O + 4 H(+)(in) = ADP + phosphate + 5 H(+)(out). Its function is as follows. Produces ATP from ADP in the presence of a proton gradient across the membrane. The catalytic sites are hosted primarily by the beta subunits. In Bacillus anthracis (strain CDC 684 / NRRL 3495), this protein is ATP synthase subunit beta.